We begin with the raw amino-acid sequence, 621 residues long: Elongation factor 4 (621 aa).

A tr-type G domain is found at 21-203 (DLIRNICIIA…AIVKRVPPPK (183 aa)). Residues 33 to 38 (DHGKTT) and 150 to 153 (NKID) contribute to the GTP site.

Belongs to the TRAFAC class translation factor GTPase superfamily. Classic translation factor GTPase family. LepA subfamily.

It localises to the cell inner membrane. The enzyme catalyses GTP + H2O = GDP + phosphate + H(+). Functionally, required for accurate and efficient protein synthesis under certain stress conditions. May act as a fidelity factor of the translation reaction, by catalyzing a one-codon backward translocation of tRNAs on improperly translocated ribosomes. Back-translocation proceeds from a post-translocation (POST) complex to a pre-translocation (PRE) complex, thus giving elongation factor G a second chance to translocate the tRNAs correctly. Binds to ribosomes in a GTP-dependent manner. The protein is Elongation factor 4 of Thermotoga maritima (strain ATCC 43589 / DSM 3109 / JCM 10099 / NBRC 100826 / MSB8).